Reading from the N-terminus, the 610-residue chain is MNSQDLKKRQEKIRNFSIIAHIDHGKSTLADRILEKTETVSSREMQAQLLDSMDLERERGITIKLNAIELNYTAKDGETYIFHLIDTPGHVDFTYEVSRSLAACEGAILVVDAAQGIEAQTLANVYLALDNDLEILPVINKIDLPAADPERVRHEVEDVIGLDASEAVLASAKAGIGIEEILEQIVEKVPAPTGDVDAPLQALIFDSVYDAYRGVILQVRIVNGIVKPGDKIQMMSNGKTFDVTEVGIFTPKAVGRDFLATGDVGYVAASIKTVADTRVGDTVTLANNPAKEALHGYKQMNPMVFAGIYPIESNKYNDLREALEKLQLNDASLQFEPETSQALGFGFRCGFLGLLHMDVIQERLEREFNIDLIMTAPSVVYHVHTTDEDMIEVSNPSEFPAPTRVAFIEEPYVKAQIMVPQEFVGAVMELSQRKRGDFVTMDYIDDNRVNVIYQIPLAEIVFDFFDKLKSSTRGYASFDYDMSEYRRSQLVKMDILLNGDKVDALSFIVHKEFAYERGKIIVEKLKKIIPRQQFEVPIQAAIGQKIVARSDIKALRKNVLAKCYGGDVSRKRKLLEKQKAGKKRMKAIGSVEVPQEAFLSVLSMDEDAKK.

The tr-type G domain maps to E11–T193. GTP is bound by residues D23–T28 and N140–D143.

The protein belongs to the TRAFAC class translation factor GTPase superfamily. Classic translation factor GTPase family. LepA subfamily.

The protein localises to the cell membrane. The enzyme catalyses GTP + H2O = GDP + phosphate + H(+). Required for accurate and efficient protein synthesis under certain stress conditions. May act as a fidelity factor of the translation reaction, by catalyzing a one-codon backward translocation of tRNAs on improperly translocated ribosomes. Back-translocation proceeds from a post-translocation (POST) complex to a pre-translocation (PRE) complex, thus giving elongation factor G a second chance to translocate the tRNAs correctly. Binds to ribosomes in a GTP-dependent manner. This chain is Elongation factor 4, found in Streptococcus pyogenes serotype M6 (strain ATCC BAA-946 / MGAS10394).